We begin with the raw amino-acid sequence, 238 residues long: Nucleoside diphosphate kinase III, chloroplastic/mitochondrial (238 aa).

A chloroplast and mitochondrion-targeting transit peptide spans 1–85 (MSSQICRSAS…YMIQDQEVLA (85 aa)). 6 residues coordinate ATP: K96, F144, R172, T178, R189, and N199. The Pros-phosphohistidine intermediate role is filled by H202.

Belongs to the NDK family. As to quaternary structure, homohexamer. It depends on Mg(2+) as a cofactor.

It localises to the plastid. Its subcellular location is the chloroplast thylakoid lumen. The protein resides in the mitochondrion intermembrane space. It catalyses the reaction a 2'-deoxyribonucleoside 5'-diphosphate + ATP = a 2'-deoxyribonucleoside 5'-triphosphate + ADP. The enzyme catalyses a ribonucleoside 5'-diphosphate + ATP = a ribonucleoside 5'-triphosphate + ADP. In terms of biological role, major role in the synthesis of nucleoside triphosphates other than ATP. The ATP gamma phosphate is transferred to the NDP beta phosphate via a ping-pong mechanism, using a phosphorylated active-site intermediate. Shows the highest specificity towards GDP. The polypeptide is Nucleoside diphosphate kinase III, chloroplastic/mitochondrial (NDPK3) (Arabidopsis thaliana (Mouse-ear cress)).